The chain runs to 414 residues: uncharacterized protein (414 aa).

Residues 1–20 (MKKLLAIGILCIMVTAVMSG) form the signal peptide. The S-archaeol cysteine moiety is linked to residue Cys-21. A Fe/B12 periplasmic-binding domain is found at 119–389 (RVIVMSSTEI…DLATILHPEA (271 aa)).

The protein resides in the cell membrane. This is an uncharacterized protein from Methanocaldococcus jannaschii (strain ATCC 43067 / DSM 2661 / JAL-1 / JCM 10045 / NBRC 100440) (Methanococcus jannaschii).